The primary structure comprises 369 residues: Phosphoribosylformylglycinamidine cyclo-ligase (369 aa).

The segment at 1-22 is disordered; that stretch reads MSKRDTSQPKTGQPKTSKRRNG.

The protein belongs to the AIR synthase family.

The protein resides in the cytoplasm. The catalysed reaction is 2-formamido-N(1)-(5-O-phospho-beta-D-ribosyl)acetamidine + ATP = 5-amino-1-(5-phospho-beta-D-ribosyl)imidazole + ADP + phosphate + H(+). Its pathway is purine metabolism; IMP biosynthesis via de novo pathway; 5-amino-1-(5-phospho-D-ribosyl)imidazole from N(2)-formyl-N(1)-(5-phospho-D-ribosyl)glycinamide: step 2/2. This is Phosphoribosylformylglycinamidine cyclo-ligase from Mesorhizobium japonicum (strain LMG 29417 / CECT 9101 / MAFF 303099) (Mesorhizobium loti (strain MAFF 303099)).